The following is a 219-amino-acid chain: LHFPL tetraspan subfamily member 5 protein (219 aa).

The Cytoplasmic segment spans residues 1 to 24 (MVKLLPAQEAAKIYHTNYVRNSRA). The chain crosses the membrane as a helical span at residues 25–45 (VGVMWGTLTICFSVLVMALFI). The Extracellular portion of the chain corresponds to 46–98 (QPYWIGDSVSTPQAGYFGLFSYCVGNVLSSELICKGGPLDFSSIPSRAFKTAM). Residues 99–119 (FFVALAMFLIIGSIICFSLFF) form a helical membrane-spanning segment. Topologically, residues 120–128 (VCNTATVYK) are cytoplasmic. The chain crosses the membrane as a helical span at residues 129–149 (ICAWMQLAAATGLMIGCLVYP). Over 150-178 (DGWDSSEVRRMCGEQTGKYTLGHCTIRWA) the chain is Extracellular. The helical transmembrane segment at 179-199 (FMLAILSIGDALILSFLAFVL) threads the bilayer. The Cytoplasmic segment spans residues 200–219 (GYRQDKLLPDDYKADGNEEV).

It belongs to the LHFP family. As to quaternary structure, forms the MET channel composed of TMC (TMC1 or TMC2), TMIE, TOMT, CIB (CIB2 or CIB3), LHPL5 and PCDH15. Interaction with PCDH15 is required for efficient localization to hair bundles.

The protein localises to the cell membrane. In terms of biological role, auxiliary subunit of the mechanotransducer (MET) non-specific cation channel complex located at the tips of the shorter stereocilia of cochlear hair cells and that mediates sensory transduction in the auditory system. The MET complex is composed of two dimeric pore-forming ion-conducting transmembrane TMC (TMC1 or TMC2) subunits, and aided by several auxiliary proteins including LHFPL5, TMIE, CIB2/3 and TOMT, and the tip-link PCDH15. Functionally couples PCDH15 to the transduction channel. In Rattus norvegicus (Rat), this protein is LHFPL tetraspan subfamily member 5 protein.